Here is a 106-residue protein sequence, read N- to C-terminus: CRISPR-associated endoribonuclease Cas2 (106 aa).

Asp8 is a binding site for Mg(2+). The disordered stretch occupies residues 86–106 (EEAAEAAVSYPGRSRKKARAG).

This sequence belongs to the CRISPR-associated endoribonuclease Cas2 protein family. Homodimer, forms a heterotetramer with a Cas1 homodimer. It depends on Mg(2+) as a cofactor.

In terms of biological role, CRISPR (clustered regularly interspaced short palindromic repeat), is an adaptive immune system that provides protection against mobile genetic elements (viruses, transposable elements and conjugative plasmids). CRISPR clusters contain sequences complementary to antecedent mobile elements and target invading nucleic acids. CRISPR clusters are transcribed and processed into CRISPR RNA (crRNA). Functions as a ssRNA-specific endoribonuclease. Involved in the integration of spacer DNA into the CRISPR cassette. In Desulforudis audaxviator (strain MP104C), this protein is CRISPR-associated endoribonuclease Cas2.